A 345-amino-acid chain; its full sequence is Dihydroorotase (345 aa).

2 residues coordinate Zn(2+): H13 and H15. Residues 15 to 17 (HLR) and N41 each bind substrate. K99, H136, and H174 together coordinate Zn(2+). N6-carboxylysine is present on K99. H136 serves as a coordination point for substrate. L219 contacts substrate. Zn(2+) is bound at residue D247. D247 is a catalytic residue. Residues H251 and A263 each coordinate substrate.

This sequence belongs to the metallo-dependent hydrolases superfamily. DHOase family. Class II DHOase subfamily. In terms of assembly, homodimer. Zn(2+) serves as cofactor.

It catalyses the reaction (S)-dihydroorotate + H2O = N-carbamoyl-L-aspartate + H(+). It functions in the pathway pyrimidine metabolism; UMP biosynthesis via de novo pathway; (S)-dihydroorotate from bicarbonate: step 3/3. Its function is as follows. Catalyzes the reversible cyclization of carbamoyl aspartate to dihydroorotate. The protein is Dihydroorotase of Hahella chejuensis (strain KCTC 2396).